The chain runs to 332 residues: Multiple virulence factor regulator MvfR (332 aa).

The HTH lysR-type domain maps to 4-61 (HNLNHVNMFLQVIASGSISSAARILRKSHTAVSSAVSNLEIDLCVELVRRDGYKVEPT). The H-T-H motif DNA-binding region spans 21 to 40 (ISSAARILRKSHTAVSSAVS).

This sequence belongs to the LysR transcriptional regulatory family. Forms homooligomers.

It localises to the cell inner membrane. The protein resides in the secreted. With respect to regulation, both 3,4-dihydroxy-2-heptylquinoline (PQS) and its precursor 4-hydroxy-2-heptylquinoline (HHQ) function as ligands and promote MvfR DNA-binding activity leading to transcriptional activation. Functionally, transcription regulator that plays a critical role in virulence by positively regulating the expression of multiple quorum sensing (QS)-regulated virulence factors, genes involved in protein secretion, translation, response to oxidative stress and the phnAB operon. At the stationary phase, negatively autoregulates its function through cleavage and translocation to the extracellular space. This is Multiple virulence factor regulator MvfR from Pseudomonas aeruginosa (strain ATCC 15692 / DSM 22644 / CIP 104116 / JCM 14847 / LMG 12228 / 1C / PRS 101 / PAO1).